Consider the following 449-residue polypeptide: Putative BTB/POZ domain-containing protein L742 (449 aa).

Positions 79 to 148 (EDGYVYINIG…LTMSNQELSG (70 aa)) constitute a BTB domain.

Belongs to the mimivirus BTB/WD family.

The chain is Putative BTB/POZ domain-containing protein L742 from Acanthamoeba polyphaga mimivirus (APMV).